The chain runs to 159 residues: Putative 2'-deoxynucleoside 5'-phosphate N-hydrolase 1 (159 aa).

Residues 25–31, Tyr-40, His-58, Glu-104, and 126–128 contribute to the substrate site; these read FLSGSIR and SAM.

The protein belongs to the 2'-deoxynucleoside 5'-phosphate N-hydrolase 1 family. As to quaternary structure, monomer and homodimer.

The catalysed reaction is a pyrimidine 2'-deoxyribonucleoside 5'-phosphate + H2O = a pyrimidine nucleobase + 2-deoxy-D-ribose 5-phosphate. The enzyme catalyses a purine 2'-deoxyribonucleoside 5'-phosphate + H2O = a purine nucleobase + 2-deoxy-D-ribose 5-phosphate. Its function is as follows. Catalyzes the cleavage of the N-glycosidic bond of deoxyribonucleoside 5'-monophosphates to yield deoxyribose 5-phosphate and a purine or pyrimidine base. In Methanosarcina barkeri (strain Fusaro / DSM 804), this protein is Putative 2'-deoxynucleoside 5'-phosphate N-hydrolase 1.